A 270-amino-acid polypeptide reads, in one-letter code: MSEALANMPGDDYFRQPPVFDTYAEHRAYLKFRHAVALRHFARLGFDQDGLAGLITVADPEHADTYWANPLAHPFSTITPADLIRVDGDSAETVEGQRRVNIAAFNIHAEIHRARPDVQAVIHLHTVYGRAFSAFARKLPPLTQDACPFFEDHEVFDDFTGLVLAKDDGRRIAKQLRGHKAILLKNHGLVTVGETLDAAAWWFTLLDTCCHVQLLADAAGKPEEIPAEVARLTGRQLGSHLLGWNSYQPLHEAALARDPDLATMEPALPS.

It belongs to the aldolase class II family.

Its pathway is antibiotic biosynthesis; novobiocin biosynthesis. Functionally, may mediate the 2 consecutive oxidative decarboxylation steps in the biosynthesis of the prenylated hydroxybenzoic acid moiety of novobiocin, an aminocoumarin family antibiotic that targets bacterial DNA gyrases. In Streptomyces niveus (Streptomyces spheroides), this protein is Decarboxylase NovR (novR).